Reading from the N-terminus, the 524-residue chain is Thioredoxin reductase 2, mitochondrial (524 aa).

Residues 1-34 (MVAAMVAALRGPSRRFRPRTRALTRGTRGAASAA) constitute a mitochondrion transit peptide. Residue 41–70 (DLLVIGGGSGGLACAKEAAQLGKKVAVADY) coordinates FAD. Lys79 carries the N6-succinyllysine modification. Cys86 and Cys91 are oxidised to a cystine. Residues Lys175 and Lys329 each carry the N6-succinyllysine modification. His497 acts as the Proton acceptor in catalysis. Residues 522-523 (CU) constitute a cross-link (cysteinyl-selenocysteine (Cys-Sec)). Sec523 is a non-standard amino acid (selenocysteine).

It belongs to the class-I pyridine nucleotide-disulfide oxidoreductase family. In terms of assembly, homodimer. It depends on FAD as a cofactor. As to expression, expressed in liver, heart, testis and kidney.

It is found in the mitochondrion. It catalyses the reaction [thioredoxin]-dithiol + NADP(+) = [thioredoxin]-disulfide + NADPH + H(+). Functionally, involved in the control of reactive oxygen species levels and the regulation of mitochondrial redox homeostasis. Maintains thioredoxin in a reduced state. May play a role in redox-regulated cell signaling. This chain is Thioredoxin reductase 2, mitochondrial, found in Mus musculus (Mouse).